The primary structure comprises 526 residues: Flavonoid 3'-monooxygenase CYP75B3 (526 aa).

Residues 6–26 (LPLLLGSLAVSAAVWYLVYFL) form a helical membrane-spanning segment. Cysteine 461 is a heme binding site.

This sequence belongs to the cytochrome P450 family. Heme is required as a cofactor.

It is found in the membrane. The catalysed reaction is a 3'-unsubstituted flavone + reduced [NADPH--hemoprotein reductase] + O2 = a 3'-hydroxyflavone + oxidized [NADPH--hemoprotein reductase] + H2O + H(+). It participates in secondary metabolite biosynthesis; flavonoid biosynthesis. In terms of biological role, catalyzes the 3'-hydroxylation of the flavonoid B-ring to the 3',4'-hydroxylated state. Catalyzes the 3'-hydroxylation of apigenin to generate luteolin. In Oryza sativa subsp. japonica (Rice), this protein is Flavonoid 3'-monooxygenase CYP75B3.